Reading from the N-terminus, the 550-residue chain is Chaperonin GroEL (550 aa).

Residues 30 to 33 (TLGP), Lys51, 87 to 91 (DGTTT), Gly415, 479 to 481 (NAA), and Asp495 each bind ATP. The tract at residues 525 to 550 (PKDEKSSSELNSAPGNGMGGGMGGMM) is disordered. Residues 540 to 550 (NGMGGGMGGMM) are compositionally biased toward gly residues.

This sequence belongs to the chaperonin (HSP60) family. Forms a cylinder of 14 subunits composed of two heptameric rings stacked back-to-back. Interacts with the co-chaperonin GroES.

The protein localises to the cytoplasm. The enzyme catalyses ATP + H2O + a folded polypeptide = ADP + phosphate + an unfolded polypeptide.. Together with its co-chaperonin GroES, plays an essential role in assisting protein folding. The GroEL-GroES system forms a nano-cage that allows encapsulation of the non-native substrate proteins and provides a physical environment optimized to promote and accelerate protein folding. In Buchnera aphidicola subsp. Cinara cedri (strain Cc), this protein is Chaperonin GroEL.